Here is a 2696-residue protein sequence, read N- to C-terminus: Histone-lysine N-methyltransferase, H3 lysine-36 specific (2696 aa).

The residue at position 117 (Ser-117) is a Phosphoserine. Disordered stretches follow at residues 207–252 (MGSE…EKAA) and 281–311 (DPDS…PFCQ). The span at 236 to 248 (QKNKQRNEVDGSN) shows a compositional bias: basic and acidic residues. Polar residues-rich tracts occupy residues 281–290 (DPDSSTSTLG) and 297–306 (GTSSSSTSQE). The 66-residue stretch at 323–388 (VGDLIWAKFK…AGKAIVMFEG (66 aa)) folds into the PWWP 1 domain. Ser-483 and Ser-486 each carry phosphoserine. The disordered stretch occupies residues 487–514 (ADEKEKPCAKSRARKSSDNPKRTSVKKG). Position 766 is a phosphoserine (Ser-766). The tract at residues 872 to 891 (LGEDVSDSGTSKPSKPLLFS) is disordered. Lys-906 is covalently cross-linked (Glycyl lysine isopeptide (Lys-Gly) (interchain with G-Cter in SUMO2)). Disordered regions lie at residues 936-1035 (YRSP…DAFS), 1067-1093 (VLQG…PLQI), 1112-1134 (SKVK…NGKG), 1243-1272 (SIGD…SEKK), 1294-1344 (PKKK…EPPV), 1382-1428 (SPRP…KKGD), and 1480-1534 (KMQC…MQGE). The segment covering 948-961 (SPVGVSKVLVSGGS) has biased composition (low complexity). The span at 971 to 982 (GTQNSANPSPSG) shows a compositional bias: polar residues. 3 stretches are compositionally biased toward basic and acidic residues: residues 1000-1017 (SDKR…DCVT), 1070-1090 (GDRE…KEDP), and 1112-1124 (SKVK…KISE). A compositionally biased stretch (basic and acidic residues) spans 1300–1314 (KVQEQVHKVSSRCEE). Residues 1323-1337 (SSAQNKQVDENSLIS) show a composition bias toward polar residues. Lys-1339 is covalently cross-linked (Glycyl lysine isopeptide (Lys-Gly) (interchain with G-Cter in SUMO2)). A Phosphoserine modification is found at Ser-1510. Residues 1513 to 1523 (ETVEEGVEHDP) show a composition bias toward basic and acidic residues. 3 consecutive PHD-type zinc fingers follow at residues 1543–1589 (ENVC…CRTG), 1590–1646 (IHTC…CHAA), and 1707–1751 (VSWC…CKAG). Residues 1756-1818 (YREIVWVKVG…QARVFPYMEG (63 aa)) enclose the PWWP 2 domain. The AWS domain maps to 1890–1940 (SEIPRCNCKATDENPCGIDSECINRMLLYECHPTVCPAGGRCQNQCFSKRQ). One can recognise an SET domain in the interval 1942-2059 (PEVEIFRTLQ…AGTELTFNYN (118 aa)). Residues 1952–1954 (RGW), 1994–1997 (TNFY), 2020–2021 (NH), Asn-2065, and Lys-2071 each bind S-adenosyl-L-methionine. An inhibits enzyme activity in the absence of bound histone region spans residues 2060-2066 (LECLGNG). In terms of domain architecture, Post-SET spans 2066–2082 (GKTVCKCGAPNCSGFLG). Residues 2091–2111 (ATEEKSKKFKKKQQGKRRTQG) are disordered. Residues 2097–2108 (KKFKKKQQGKRR) show a composition bias toward basic residues. The PHD-type 4; atypical zinc finger occupies 2118–2165 (EDECFSCGDAGQLVSCKKPGCPKVYHADCLNLTKRPAGKWECPWHQCD). The disordered stretch occupies residues 2213–2422 (LEPGEIREYV…SLSQRLPPPE (210 aa)). Residues 2222–2232 (VPPPVPLPPGP) show a composition bias toward pro residues. Residues 2281 to 2298 (RPLERTDSRPQPLDKVRD) are compositionally biased toward basic and acidic residues. The span at 2303–2314 (GTKSQSLVSSQR) shows a compositional bias: polar residues. Over residues 2330-2348 (SDKPSPVTSPSSSPSVRSQ) the composition is skewed to low complexity. A Phosphoserine modification is found at Ser-2369. Polar residues-rich tracts occupy residues 2371–2381 (RPQSLEKTSVP) and 2394–2404 (ITSSPKPQTSD). Residue Thr-2462 is modified to Phosphothreonine. 4 disordered regions span residues 2464 to 2499 (RQKE…GLGH), 2553 to 2575 (TQAS…QSPG), 2595 to 2616 (KSGQ…EEKK), and 2665 to 2696 (LGRG…SEQK). Residue Ser-2471 is modified to Phosphoserine. Residue Lys-2616 forms a Glycyl lysine isopeptide (Lys-Gly) (interchain with G-Cter in SUMO2) linkage. Residues 2674–2686 (EQNTLPALNQAPS) show a composition bias toward polar residues.

It belongs to the class V-like SAM-binding methyltransferase superfamily. As to quaternary structure, interacts with the ligand-binding domains of RARA and THRA in the absence of ligand; in the presence of ligand the interaction is severely disrupted but some binding still occurs. Interacts with the ligand-binding domains of RXRA and ESRRA only in the presence of ligand. Interacts with ZNF496. Interacts with AR DNA- and ligand-binding domains. As to expression, expressed in the fetal/adult brain, kidney, skeletal muscle, spleen, and the thymus, and faintly in the lung.

Its subcellular location is the nucleus. The protein localises to the chromosome. The catalysed reaction is L-lysyl(36)-[histone H3] + 2 S-adenosyl-L-methionine = N(6),N(6)-dimethyl-L-lysyl(36)-[histone H3] + 2 S-adenosyl-L-homocysteine + 2 H(+). Functionally, histone methyltransferase that dimethylates Lys-36 of histone H3 (H3K36me2). Transcriptional intermediary factor capable of both negatively or positively influencing transcription, depending on the cellular context. The polypeptide is Histone-lysine N-methyltransferase, H3 lysine-36 specific (NSD1) (Homo sapiens (Human)).